We begin with the raw amino-acid sequence, 48 residues long: uncharacterized protein (48 aa).

The signal sequence occupies residues 1 to 21 (MLENNVFRLMILMGGVIALIA).

This is an uncharacterized protein from Bacillus anthracis.